We begin with the raw amino-acid sequence, 312 residues long: Ribosomal protein L11 methyltransferase (312 aa).

4 residues coordinate S-adenosyl-L-methionine: Thr160, Gly181, Asp203, and Asn246.

It belongs to the methyltransferase superfamily. PrmA family.

Its subcellular location is the cytoplasm. The catalysed reaction is L-lysyl-[protein] + 3 S-adenosyl-L-methionine = N(6),N(6),N(6)-trimethyl-L-lysyl-[protein] + 3 S-adenosyl-L-homocysteine + 3 H(+). Functionally, methylates ribosomal protein L11. The chain is Ribosomal protein L11 methyltransferase from Staphylococcus aureus (strain JH1).